We begin with the raw amino-acid sequence, 546 residues long: Cation/calcium exchanger 5 (546 aa).

The next 13 helical transmembrane spans lie at 13–33 (ALCL…TTIP), 88–108 (NLFF…YILI), 134–154 (AVTL…VAAL), 163–183 (FGAI…FVAI), 194–214 (SFVR…YVYL), 218–238 (IFVW…GFVF), 323–343 (SANI…FVQL), 356–376 (LPLW…HFTV), 388–408 (VIVV…GELL), 423–445 (ALLG…DVAV), 455–475 (MAGC…SALV), 492–512 (VGIV…LLVI), and 522–542 (FWGI…LIIA).

Belongs to the Ca(2+):cation antiporter (CaCA) (TC 2.A.19) family. Cation/calcium exchanger (CCX) subfamily.

The protein resides in the cell membrane. In terms of biological role, membrane-localized H(+)-dependent K(+) and Na(+) transporter. This is Cation/calcium exchanger 5 (CCX5) from Arabidopsis thaliana (Mouse-ear cress).